Reading from the N-terminus, the 212-residue chain is Pyridoxine/pyridoxamine 5'-phosphate oxidase (212 aa).

Residues 61–66 (RSVLLK), 76–77 (YT), Lys83, and Gln105 contribute to the FMN site. Lys66 contacts substrate. Substrate-binding residues include Tyr123, Arg127, and Ser131. FMN contacts are provided by residues 140-141 (QS) and Trp185. 191-193 (RLH) lines the substrate pocket. Arg195 contributes to the FMN binding site.

The protein belongs to the pyridoxamine 5'-phosphate oxidase family. In terms of assembly, homodimer. Requires FMN as cofactor.

The catalysed reaction is pyridoxamine 5'-phosphate + O2 + H2O = pyridoxal 5'-phosphate + H2O2 + NH4(+). It catalyses the reaction pyridoxine 5'-phosphate + O2 = pyridoxal 5'-phosphate + H2O2. It functions in the pathway cofactor metabolism; pyridoxal 5'-phosphate salvage; pyridoxal 5'-phosphate from pyridoxamine 5'-phosphate: step 1/1. It participates in cofactor metabolism; pyridoxal 5'-phosphate salvage; pyridoxal 5'-phosphate from pyridoxine 5'-phosphate: step 1/1. Catalyzes the oxidation of either pyridoxine 5'-phosphate (PNP) or pyridoxamine 5'-phosphate (PMP) into pyridoxal 5'-phosphate (PLP). This Dichelobacter nodosus (strain VCS1703A) protein is Pyridoxine/pyridoxamine 5'-phosphate oxidase.